A 275-amino-acid chain; its full sequence is MAIVKVKPTSPGRRAMVKVVNKDLHKGKPYAPLLDTQSSTAGRNNNGHITTRHKGGGHKHHYRIVDFRRTKDGIPAKVERLEYDPNRSANIALVVYADGERRYIIAPKGVTVGQQLMSGSEAPIRAGNTLPIRNIPVGTTIHCIEMLPGKGAQMARSAGTSAMLLAREGTYAQVRLRSGEIRRVHIECRATIGEVGNEEHSLRQIGKAGANRWRGIRPTVRGVAMNPVDHPHGGGEGKTAAGRDPVSPWGTPTKGYRTRSNKRTTSMIVQRRHKR.

Disordered stretches follow at residues 28-59 (KPYA…GGHK) and 224-275 (AMNP…RHKR). Polar residues predominate over residues 35–46 (DTQSSTAGRNNN). Over residues 50 to 59 (TTRHKGGGHK) the composition is skewed to basic residues.

Belongs to the universal ribosomal protein uL2 family. In terms of assembly, part of the 50S ribosomal subunit. Forms a bridge to the 30S subunit in the 70S ribosome.

One of the primary rRNA binding proteins. Required for association of the 30S and 50S subunits to form the 70S ribosome, for tRNA binding and peptide bond formation. It has been suggested to have peptidyltransferase activity; this is somewhat controversial. Makes several contacts with the 16S rRNA in the 70S ribosome. This Paraburkholderia phymatum (strain DSM 17167 / CIP 108236 / LMG 21445 / STM815) (Burkholderia phymatum) protein is Large ribosomal subunit protein uL2.